Consider the following 180-residue polypeptide: ATP synthase subunit delta (180 aa).

The protein belongs to the ATPase delta chain family. In terms of assembly, F-type ATPases have 2 components, F(1) - the catalytic core - and F(0) - the membrane proton channel. F(1) has five subunits: alpha(3), beta(3), gamma(1), delta(1), epsilon(1). F(0) has three main subunits: a(1), b(2) and c(10-14). The alpha and beta chains form an alternating ring which encloses part of the gamma chain. F(1) is attached to F(0) by a central stalk formed by the gamma and epsilon chains, while a peripheral stalk is formed by the delta and b chains.

It localises to the cell inner membrane. F(1)F(0) ATP synthase produces ATP from ADP in the presence of a proton or sodium gradient. F-type ATPases consist of two structural domains, F(1) containing the extramembraneous catalytic core and F(0) containing the membrane proton channel, linked together by a central stalk and a peripheral stalk. During catalysis, ATP synthesis in the catalytic domain of F(1) is coupled via a rotary mechanism of the central stalk subunits to proton translocation. In terms of biological role, this protein is part of the stalk that links CF(0) to CF(1). It either transmits conformational changes from CF(0) to CF(1) or is implicated in proton conduction. This is ATP synthase subunit delta from Geobacter metallireducens (strain ATCC 53774 / DSM 7210 / GS-15).